A 684-amino-acid polypeptide reads, in one-letter code: DNA-directed RNA polymerase subunit beta' (684 aa).

The Zn(2+) site is built by C69, C71, C87, and C90. Mg(2+) is bound by residues D491, D493, and D495.

It belongs to the RNA polymerase beta' chain family. RpoC1 subfamily. In terms of assembly, in plastids the minimal PEP RNA polymerase catalytic core is composed of four subunits: alpha, beta, beta', and beta''. When a (nuclear-encoded) sigma factor is associated with the core the holoenzyme is formed, which can initiate transcription. The cofactor is Mg(2+). Zn(2+) is required as a cofactor.

The protein resides in the plastid. It localises to the chloroplast. The catalysed reaction is RNA(n) + a ribonucleoside 5'-triphosphate = RNA(n+1) + diphosphate. Its function is as follows. DNA-dependent RNA polymerase catalyzes the transcription of DNA into RNA using the four ribonucleoside triphosphates as substrates. The polypeptide is DNA-directed RNA polymerase subunit beta' (Phaseolus vulgaris (Kidney bean)).